The following is a 240-amino-acid chain: UDP-2,3-diacylglucosamine hydrolase (240 aa).

5 residues coordinate Mn(2+): aspartate 8, histidine 10, aspartate 41, asparagine 79, and histidine 114. 79–80 (NR) contributes to the substrate binding site. Residues aspartate 122, serine 160, asparagine 164, lysine 167, and histidine 195 each contribute to the substrate site. Positions 195 and 197 each coordinate Mn(2+).

Belongs to the LpxH family. The cofactor is Mn(2+).

It is found in the cell inner membrane. It catalyses the reaction UDP-2-N,3-O-bis[(3R)-3-hydroxytetradecanoyl]-alpha-D-glucosamine + H2O = 2-N,3-O-bis[(3R)-3-hydroxytetradecanoyl]-alpha-D-glucosaminyl 1-phosphate + UMP + 2 H(+). It functions in the pathway glycolipid biosynthesis; lipid IV(A) biosynthesis; lipid IV(A) from (3R)-3-hydroxytetradecanoyl-[acyl-carrier-protein] and UDP-N-acetyl-alpha-D-glucosamine: step 4/6. Functionally, hydrolyzes the pyrophosphate bond of UDP-2,3-diacylglucosamine to yield 2,3-diacylglucosamine 1-phosphate (lipid X) and UMP by catalyzing the attack of water at the alpha-P atom. Involved in the biosynthesis of lipid A, a phosphorylated glycolipid that anchors the lipopolysaccharide to the outer membrane of the cell. This is UDP-2,3-diacylglucosamine hydrolase from Salmonella typhi.